Reading from the N-terminus, the 188-residue chain is Probable DNA-directed RNA polymerase subunit delta (188 aa).

The region spanning 14–81 (LSMIEVAHAL…GNNVWALRSW (68 aa)) is the HTH HARE-type domain. The interval 96-188 (EIEDEEEEEK…EDDSDDTDED (93 aa)) is disordered. Composition is skewed to acidic residues over residues 118–150 (IEDE…EDKD) and 158–188 (ELAE…TDED).

It belongs to the RpoE family. RNAP is composed of a core of 2 alpha, a beta and a beta' subunits. The core is associated with a delta subunit and one of several sigma factors.

Functionally, participates in both the initiation and recycling phases of transcription. In the presence of the delta subunit, RNAP displays an increased specificity of transcription, a decreased affinity for nucleic acids, and an increased efficiency of RNA synthesis because of enhanced recycling. The polypeptide is Probable DNA-directed RNA polymerase subunit delta (Lactococcus lactis subsp. cremoris (strain MG1363)).